A 426-amino-acid chain; its full sequence is MSTADEVTKKPRRRFVGVSRGENKVSTKQVSGDEAKELVRSAKSNTGARRAINQIPDEILNDENLQEAIKLLPSNYNFEIHKTVWNIRKHNAKRVALQMPEGLLIYSLVISDILEQFCNCETVVMGDVSYGACCIDDFTARALGCDFIVHYAHSCLVPVDVTSIKILYVFVTIGIDEDHLMKTLQKNFAKGTSLAVFGTIQFNPAIHSIREKLLYSESHMLYITPPQIKPLSKGEVLGCTSQRLPKEQFAAMVYVGDGRFHLESAMIHNPDIPAFRYDPYSRKFTRETYDQHQLVEVRSSAIEKARNSQCFGLILGALGRQGNLATVANLEKKLRAAGKKVVRIILSEIFPQKLAMFDHIDAFVQVACPRLSIDWGYAFNKPLLTPYETNVMLGQDRMFNEKYYPMDYYEVNGYGRGKQPTHDNVI.

[4Fe-4S] cluster contacts are provided by Cys-133, Cys-239, and Cys-368.

Belongs to the DPH1/DPH2 family. DPH1 subfamily. As to quaternary structure, component of the 2-(3-amino-3-carboxypropyl)histidine synthase complex composed of DPH1, DPH2, DPH3 and a NADH-dependent reductase, predominantly CBR1. It depends on [4Fe-4S] cluster as a cofactor.

Its subcellular location is the cytoplasm. The enzyme catalyses L-histidyl-[translation elongation factor 2] + S-adenosyl-L-methionine = 2-[(3S)-amino-3-carboxypropyl]-L-histidyl-[translation elongation factor 2] + S-methyl-5'-thioadenosine + H(+). It functions in the pathway protein modification; peptidyl-diphthamide biosynthesis. Its function is as follows. Catalyzes the first step of diphthamide biosynthesis, a post-translational modification of histidine which occurs in elongation factor 2. DPH1 and DPH2 transfer a 3-amino-3-carboxypropyl (ACP) group from S-adenosyl-L-methionine (SAM) to a histidine residue, the reaction is assisted by a reduction system comprising DPH3 and a NADH-dependent reductase, predominantly CBR1. This is 2-(3-amino-3-carboxypropyl)histidine synthase subunit 1 (DPH1) from Eremothecium gossypii (strain ATCC 10895 / CBS 109.51 / FGSC 9923 / NRRL Y-1056) (Yeast).